The following is a 174-amino-acid chain: Protein MOTHER of FT and TFL1 homolog 2 (174 aa).

It belongs to the phosphatidylethanolamine-binding protein family.

Its function is as follows. May form complexes with phosphorylated ligands by interfering with kinases and their effectors. The protein is Protein MOTHER of FT and TFL1 homolog 2 of Oryza sativa subsp. japonica (Rice).